A 379-amino-acid polypeptide reads, in one-letter code: RIB43A-like with coiled-coils protein 1 (379 aa).

Coiled-coil stretches lie at residues 43-111 and 285-337; these read EALN…RCEL and IRKV…EFRR.

It belongs to the RIB43A family. In terms of assembly, microtubule inner protein component of sperm flagellar doublet microtubules.

The protein resides in the cytoplasm. The protein localises to the cytoskeleton. It is found in the flagellum axoneme. This is RIB43A-like with coiled-coils protein 1 (RIBC1) from Bos taurus (Bovine).